An 82-amino-acid polypeptide reads, in one-letter code: Consomatin Ar1 (82 aa).

The N-terminal stretch at 1–22 (MQTAYWVVVMMMMVWVTAPVSE) is a signal peptide. The propeptide occupies 23-60 (GGKLSDVIWGLVPDDLTPQIILQILNASRHAYRRVRPR). A disulfide bond links Cys-64 and Cys-69. Trp-66 is subject to D-tryptophan. 4-hydroxyproline is present on residues Pro-70, Pro-71, and Pro-73. Positions 74–82 (QWIHPLVKR) are excised as a propeptide.

Belongs to the conotoxin C superfamily. Consomatin family. As to expression, expressed by the venom duct.

The protein localises to the secreted. Moderately activates human somatostatin receptors (SSTR) with a preferential activation of SSTR1 and SSTR4. In vivo, does not cause behavioral changes in mice within a few minutes of intracranial injection, but causes a progressive loss of movement thereafter. Four to five hours after injection, mice recover, even with the highest dose tested. Shows antinociception and antihyperalgesia activities in two mouse models of acute pain, most probably by acting outside the central nervous system. This is Consomatin Ar1 from Conus arenatus (Sand-dusted cone).